A 139-amino-acid chain; its full sequence is D-ribose pyranase (139 aa).

The Proton donor role is filled by His20. Substrate is bound by residues Asp28, His106, and 128 to 130 (YAN).

It belongs to the RbsD / FucU family. RbsD subfamily. As to quaternary structure, homodecamer.

The protein localises to the cytoplasm. The catalysed reaction is beta-D-ribopyranose = beta-D-ribofuranose. The protein operates within carbohydrate metabolism; D-ribose degradation; D-ribose 5-phosphate from beta-D-ribopyranose: step 1/2. Functionally, catalyzes the interconversion of beta-pyran and beta-furan forms of D-ribose. This is D-ribose pyranase from Pectobacterium carotovorum subsp. carotovorum (strain PC1).